The chain runs to 476 residues: Eukaryotic translation initiation factor 3 subunit L (476 aa).

Residues 257 to 452 form the PCI domain; sequence DAIRMFSHIL…DLDYALENDL (196 aa).

This sequence belongs to the eIF-3 subunit L family. In terms of assembly, component of the eukaryotic translation initiation factor 3 (eIF-3) complex.

It localises to the cytoplasm. Component of the eukaryotic translation initiation factor 3 (eIF-3) complex, which is involved in protein synthesis of a specialized repertoire of mRNAs and, together with other initiation factors, stimulates binding of mRNA and methionyl-tRNAi to the 40S ribosome. The eIF-3 complex specifically targets and initiates translation of a subset of mRNAs involved in cell proliferation. This is Eukaryotic translation initiation factor 3 subunit L from Aspergillus oryzae (strain ATCC 42149 / RIB 40) (Yellow koji mold).